A 147-amino-acid polypeptide reads, in one-letter code: Protein J1 homolog (147 aa).

Belongs to the chordopoxvirinae J1 family. In terms of assembly, homodimer. Part of a complex composed of A30, G7, F10 kinase, A15, D2, D3, and J1. Interacts with A45.

It is found in the virion. It localises to the host cytoplasm. In terms of biological role, late protein which is a part of a large complex required for early virion morphogenesis. This complex participates in the formation of virosomes and the incorporation of virosomal contents into nascent immature virions. J1 protein is required for DNA packaging during immature virions (IV) formation. The polypeptide is Protein J1 homolog (Sheeppox virus (strain KS-1) (SPPV)).